Here is a 643-residue protein sequence, read N- to C-terminus: 1-deoxy-D-xylulose-5-phosphate synthase (643 aa).

Thiamine diphosphate-binding positions include His-78 and 119-121 (AHS). Asp-150 provides a ligand contact to Mg(2+). Thiamine diphosphate contacts are provided by residues 151-152 (GA), Asn-179, Tyr-288, and Glu-370. Asn-179 lines the Mg(2+) pocket.

The protein belongs to the transketolase family. DXPS subfamily. Homodimer. Mg(2+) serves as cofactor. Thiamine diphosphate is required as a cofactor.

It carries out the reaction D-glyceraldehyde 3-phosphate + pyruvate + H(+) = 1-deoxy-D-xylulose 5-phosphate + CO2. It participates in metabolic intermediate biosynthesis; 1-deoxy-D-xylulose 5-phosphate biosynthesis; 1-deoxy-D-xylulose 5-phosphate from D-glyceraldehyde 3-phosphate and pyruvate: step 1/1. Its function is as follows. Catalyzes the acyloin condensation reaction between C atoms 2 and 3 of pyruvate and glyceraldehyde 3-phosphate to yield 1-deoxy-D-xylulose-5-phosphate (DXP). In Xanthobacter autotrophicus (strain ATCC BAA-1158 / Py2), this protein is 1-deoxy-D-xylulose-5-phosphate synthase.